The sequence spans 599 residues: rRNA (cytosine-C(5))-methyltransferase NOP2C (599 aa).

In terms of domain architecture, PUA spans 158–265; it reads PKEVLVSRKC…IAVDLNHRVF (108 aa). Residues 304–310, aspartate 328, and aspartate 355 contribute to the S-adenosyl-L-methionine site; that span reads CAAPGGK. Positions 372–454 are disordered; the sequence is LINGDNSSSM…GGRAGKSQGF (83 aa). The segment covering 378–388 has biased composition (low complexity); the sequence is SSSMTSHSELS. A compositionally biased stretch (basic and acidic residues) spans 399–412; that stretch reads RRSEADKSCEKNDS. Residues 413–424 show a composition bias toward polar residues; sequence TEQPNGGDNVSQ. Basic residues predominate over residues 428 to 438; that stretch reads RKNKGRLKNGR. Position 465 (aspartate 465) interacts with S-adenosyl-L-methionine. Catalysis depends on cysteine 516, which acts as the Nucleophile.

This sequence belongs to the class I-like SAM-binding methyltransferase superfamily. RsmB/NOP family.

Its subcellular location is the nucleus. It is found in the nucleolus. It catalyses the reaction a cytidine in rRNA + S-adenosyl-L-methionine = a 5-methylcytidine in rRNA + S-adenosyl-L-homocysteine + H(+). Functionally, involved in ribosomal large subunit assembly. S-adenosyl-L-methionine-dependent methyltransferase that may methylates the C(5) position of cytosine in rRNA. May play a role in the regulation of the cell cycle and the increased nucleolar activity that is associated with the cell proliferation. Seems involved in the regulation of cell proliferation. In Arabidopsis thaliana (Mouse-ear cress), this protein is rRNA (cytosine-C(5))-methyltransferase NOP2C.